The sequence spans 98 residues: MPPIYINIILAYTASLVGLLMYRSHFMSSLLCLEGMMLSLFILATILSLNLHFTLSFTLPIILLIFAGCETAVGLALLVMISDIYGLDHVQNLNLLQC.

Transmembrane regions (helical) follow at residues 1–21, 29–49, and 61–81; these read MPPI…GLLM, SLLC…ILSL, and IILL…LVMI.

It belongs to the complex I subunit 4L family. In terms of assembly, core subunit of respiratory chain NADH dehydrogenase (Complex I) which is composed of 45 different subunits.

The protein resides in the mitochondrion inner membrane. The catalysed reaction is a ubiquinone + NADH + 5 H(+)(in) = a ubiquinol + NAD(+) + 4 H(+)(out). Functionally, core subunit of the mitochondrial membrane respiratory chain NADH dehydrogenase (Complex I) which catalyzes electron transfer from NADH through the respiratory chain, using ubiquinone as an electron acceptor. Part of the enzyme membrane arm which is embedded in the lipid bilayer and involved in proton translocation. This Galeopterus variegatus (Malayan flying lemur) protein is NADH-ubiquinone oxidoreductase chain 4L (MT-ND4L).